The following is a 65-amino-acid chain: Large ribosomal subunit protein uL29 (65 aa).

The protein belongs to the universal ribosomal protein uL29 family.

The chain is Large ribosomal subunit protein uL29 from Psychrobacter arcticus (strain DSM 17307 / VKM B-2377 / 273-4).